Consider the following 319-residue polypeptide: Ornithine carbamoyltransferase (319 aa).

Carbamoyl phosphate is bound by residues 57 to 60, glutamine 84, arginine 108, and 135 to 138; these read STRT and HPCQ. Residues asparagine 166, aspartate 230, and 234–235 each bind L-ornithine; that span reads SM. Carbamoyl phosphate contacts are provided by residues 270-271 and arginine 298; that span reads CL.

This sequence belongs to the aspartate/ornithine carbamoyltransferase superfamily. OTCase family.

The protein resides in the cytoplasm. The catalysed reaction is carbamoyl phosphate + L-ornithine = L-citrulline + phosphate + H(+). It participates in amino-acid biosynthesis; L-arginine biosynthesis; L-arginine from L-ornithine and carbamoyl phosphate: step 1/3. Functionally, reversibly catalyzes the transfer of the carbamoyl group from carbamoyl phosphate (CP) to the N(epsilon) atom of ornithine (ORN) to produce L-citrulline. The polypeptide is Ornithine carbamoyltransferase (argF) (Bacillus subtilis (strain 168)).